Consider the following 290-residue polypeptide: MQQQINPEIIQEISDDLRVQVLTEALPYIQKWRNEIMVIKYGGAVVKQDADIIKDILFLTCCGFQIVVVHGGGPLINEWLKQLNKSPQYWEGIRVTDKVTMEIVEMVLAGKVNKQLVGSINANGGKAIGLCGKDANLIVAKASSKKELGLVGEIEQIHPQVIDMLLEKHYIPVIASVAASHDGTTYNLNADVVAGELAIKLKAKKLIFLTDTKGILADINNENSVISTLNLKEAKNLANTISGGMIPKVNACICAVENGVEAAHIIGGKEKHQLLLELLTEKGRGSMIVV.

Residues 72-73, arginine 94, and asparagine 187 each bind substrate; that span reads GG.

It belongs to the acetylglutamate kinase family. ArgB subfamily.

Its subcellular location is the plastid. The protein resides in the chloroplast. It catalyses the reaction N-acetyl-L-glutamate + ATP = N-acetyl-L-glutamyl 5-phosphate + ADP. Its pathway is amino-acid biosynthesis; L-arginine biosynthesis; N(2)-acetyl-L-ornithine from L-glutamate: step 2/4. In terms of biological role, catalyzes the ATP-dependent phosphorylation of N-acetyl-L-glutamate. The sequence is that of Acetylglutamate kinase from Cyanidioschyzon merolae (strain NIES-3377 / 10D) (Unicellular red alga).